The following is a 162-amino-acid chain: MIQLYTSNGNFDYTCLILAGPAEMKNIVIDHDLFSIFKDHVSCIHNISEITDNSISQVVSMSIESIDSDNIDSIKEFENKLQNPIKTNLFVFGSKIVLKLFGLNRLSDIYITSDYYDIETILENRGKCSVHYMDPILFKKYGDIVGVKYYEYDYNDEYDYNY.

This is an uncharacterized protein from Acanthamoeba polyphaga (Amoeba).